We begin with the raw amino-acid sequence, 87 residues long: Diazepam-binding inhibitor-like 5 (87 aa).

The ACB domain occupies 2-87; sequence SQVEFEMACA…VEELKKKEPC (86 aa). Residues 29 to 33, lysine 55, and tyrosine 74 contribute to the an acyl-CoA site; that span reads YSFYK.

The protein belongs to the ACBP family. In terms of tissue distribution, exclusively expressed in late spermatids and spermatozoa. Not found in epididymis, spleen, bone marrow, skin, liver, brain, heart, kidney, muscle.

It localises to the cytoplasm. Its function is as follows. May be involved in the energy metabolism of the mature sperm. The sequence is that of Diazepam-binding inhibitor-like 5 (Dbil5) from Mus musculus (Mouse).